A 298-amino-acid polypeptide reads, in one-letter code: tRNA dimethylallyltransferase (298 aa).

10-17 (GPTASGKT) is a binding site for ATP. Position 12–17 (12–17 (TASGKT)) interacts with substrate. Positions 35–38 (DSMC) are interaction with substrate tRNA.

Belongs to the IPP transferase family. In terms of assembly, monomer. Requires Mg(2+) as cofactor.

The enzyme catalyses adenosine(37) in tRNA + dimethylallyl diphosphate = N(6)-dimethylallyladenosine(37) in tRNA + diphosphate. Catalyzes the transfer of a dimethylallyl group onto the adenine at position 37 in tRNAs that read codons beginning with uridine, leading to the formation of N6-(dimethylallyl)adenosine (i(6)A). The sequence is that of tRNA dimethylallyltransferase from Hydrogenobaculum sp. (strain Y04AAS1).